The chain runs to 1030 residues: Beta-galactosidase (1030 aa).

Substrate is bound by residues asparagine 99 and aspartate 197. Residue aspartate 197 participates in Na(+) binding. Glutamate 411, histidine 413, and glutamate 456 together coordinate Mg(2+). Substrate contacts are provided by residues glutamate 456 and 532 to 535 (EYAH). The active-site Proton donor is glutamate 456. Glutamate 532 functions as the Nucleophile in the catalytic mechanism. Asparagine 592 is a Mg(2+) binding site. Na(+)-binding residues include phenylalanine 596 and asparagine 599. The substrate site is built by asparagine 599 and tryptophan 1004.

This sequence belongs to the glycosyl hydrolase 2 family. In terms of assembly, homotetramer. The cofactor is Mg(2+). Na(+) is required as a cofactor.

The enzyme catalyses Hydrolysis of terminal non-reducing beta-D-galactose residues in beta-D-galactosides.. This Photobacterium profundum (strain SS9) protein is Beta-galactosidase.